The sequence spans 416 residues: Muscle-specific homeobox protein tinman (416 aa).

Composition is skewed to polar residues over residues 1-11 and 18-33; these read MLQHHQQQAQS and YTQS…ADAL. Disordered stretches follow at residues 1-33, 246-305, and 391-416; these read MLQH…ADAL, TASN…RKPR, and VMWP…MQHM. Low complexity predominate over residues 281-295; it reads NSISGNSNPGSNSGS. The segment at residues 301 to 360 is a DNA-binding region (homeobox); it reads KRKPRVLFSQAQVLELECRFRLKKYLTGAEREIIAQKLNLSATQVKIWFQNRRYKSKRGD. Positions 397 to 416 are enriched in low complexity; that stretch reads MQQSQQQQQHHAQQQQMQHM.

It localises to the nucleus. Functionally, required for the development of heart and visceral muscle; for the formation of somatic muscles. Has a crucial function in the early mesodermal subdivisions. This Drosophila melanogaster (Fruit fly) protein is Muscle-specific homeobox protein tinman (tin).